We begin with the raw amino-acid sequence, 62 residues long: Photosystem II reaction center protein Z (62 aa).

The next 2 membrane-spanning stretches (helical) occupy residues 8–28 (ALFALVAISFILVVGVPVILA) and 41–61 (FSGASLWIFLVFVVGILNSFI).

It belongs to the PsbZ family. In terms of assembly, PSII is composed of 1 copy each of membrane proteins PsbA, PsbB, PsbC, PsbD, PsbE, PsbF, PsbH, PsbI, PsbJ, PsbK, PsbL, PsbM, PsbT, PsbY, PsbZ, Psb30/Ycf12, at least 3 peripheral proteins of the oxygen-evolving complex and a large number of cofactors. It forms dimeric complexes.

The protein localises to the plastid. It is found in the chloroplast thylakoid membrane. In terms of biological role, may control the interaction of photosystem II (PSII) cores with the light-harvesting antenna, regulates electron flow through the 2 photosystem reaction centers. PSII is a light-driven water plastoquinone oxidoreductase, using light energy to abstract electrons from H(2)O, generating a proton gradient subsequently used for ATP formation. This chain is Photosystem II reaction center protein Z, found in Chara vulgaris (Common stonewort).